We begin with the raw amino-acid sequence, 217 residues long: Killer cell lectin-like receptor subfamily B member 1F (217 aa).

Topologically, residues 1 to 45 are cytoplasmic; the sequence is MDTSRVYGNVKTFRSPGHKQASFPSLSTDACRCPHWHHLALKLGC. The LCK-binding motif signature appears at 31–34; sequence CRCP. Residues 46 to 66 traverse the membrane as a helical; Signal-anchor for type II membrane protein segment; that stretch reads ATLILLLLTLIGLSVFVRFLV. Over 67–217 the chain is Extracellular; it reads QKPLIEKCSM…WICQKTLKHV (151 aa). In terms of domain architecture, C-type lectin spans 101–211; sequence HRNKCLIISQ…CSSDNHWICQ (111 aa). 2 cysteine pairs are disulfide-bonded: cysteine 122–cysteine 210 and cysteine 189–cysteine 202.

In terms of tissue distribution, expressed in natural killer cells and a subset of T-cells.

It localises to the membrane. Its function is as follows. Binds CLEC2I/Clr-g leading to activation of natural killer cells or stimulation of IL-2 production and proliferation of T-cells in response to antigen stimulation. May contribute to the formation of the immunological synapse between T-cells and antigen-presenting dendritic cells. This Rattus norvegicus (Rat) protein is Killer cell lectin-like receptor subfamily B member 1F.